The primary structure comprises 584 residues: Cilia- and flagella-associated protein 184 (584 aa).

3 stretches are compositionally biased toward basic and acidic residues: residues 1-18 (MDSH…EEGL), 42-57 (PEPK…REPE), and 67-82 (SKAK…HVEV). Residues 1–243 (MDSHYGDIEG…ASTEEFEWTA (243 aa)) form a disordered region. The segment covering 119–146 (DKDEDEDEDEDEDEDEDEDEDEDEDEGE) has biased composition (acidic residues). A compositionally biased stretch (basic and acidic residues) spans 189-232 (AKEKARESLKKRDSEEIEGTDRERHKSTEEQLHPGEAKEEEKQK). Coiled coils occupy residues 317–470 (LAML…SNVQ) and 530–561 (LLGK…KRHH).

This sequence belongs to the CFAP184 family. Forms a complex with CFAP263; the interaction is required for functional activity in cilia.

The protein localises to the cell projection. Its subcellular location is the cilium. It localises to the cytoplasm. The protein resides in the cytoskeleton. It is found in the microtubule organizing center. The protein localises to the centrosome. In complex with CFAP263, acts as a regulator of ciliary beating that connects radial spoke 3 (RS3) to the inner dynein arm (IDA) and the nexin-dynein regulatory complex (N-DRC). The complex is positioned parallel to N-DRC and forms a connection between the arch at the base of RS3, the IDA tail and N-DRC. The sequence is that of Cilia- and flagella-associated protein 184 (Cfap184) from Mus musculus (Mouse).